A 708-amino-acid chain; its full sequence is MSIDDLKLPSNVIDIIKNRGIKKLNPPQTEAVKKGLLDGNRLLLTSPTGSGKTLIAEMGIISFLLKNGGKAIYVTPLRALTNEKYLTFKDWESIGFKVAMTSGDYDTDDAWLKNYDIIITTYEKLDSLWRHRPDWLNEANYFVLDELHYLNDPERGPVVESVTIRAKRRNLLALSATISNYKQIAKWLGAEPVATNWRPVPLMEGVMYPERKKKEYTILFRDNTARKVHGDDAIIAYTLDSLSKNGQVLVFRNSRKMAESTALKIANYMNFVSLDEKAISEILKQLDDIEEGGSDEKELLKSLISKGVAYHHAGLSKALRDIIEESFRKRKIKVIVATPTLAAGVNLPARTVIIGDIYRFNRKIVGYYDEIPVMEYKQMSGRAGRPGFDQIGESIIVVRDKEDVDRVFKKYILSDVEPIESKLGSERAFYTFLLGILSAEGSLSEKQLEAFAYESLLAKSVVDVYFDRAIRWLSEHSFIREENNTFTLTNFGKRVADLYINPFTADIIRKGLEGYKASCEIAYLHLLAFTPDGPLVSVGRNEEEELIELLEDLECELLVEEPYEEDEYSLYLNALKVALIMKDWIDEVDEDTILGKYNIGSGDLRNIVETMDWLTYSAYHLSKELRLDDHSDKLRILNLRVTDGVKEELLELVQIGGVGRKRARLLYNNGIKGLGDVVMNPDRVRNLLGQKLGERVVQEAARLLNRFH.

The short motif at 1 to 29 (MSIDDLKLPSNVIDIIKNRGIKKLNPPQT) is the Q motif element. ATP contacts are provided by residues Gln-28 and 46–53 (SPTGSGKT). A Helicase ATP-binding domain is found at 33 to 196 (KKGLLDGNRL…WLGAEPVATN (164 aa)). Residues 145 to 148 (DELH) carry the DEAH box motif. The Helicase C-terminal domain occupies 229 to 435 (HGDDAIIAYT…ERAFYTFLLG (207 aa)).

This sequence belongs to the helicase family. Hel308 subfamily. As to quaternary structure, monomer.

The catalysed reaction is Couples ATP hydrolysis with the unwinding of duplex DNA by translocating in the 3'-5' direction.. The enzyme catalyses ATP + H2O = ADP + phosphate + H(+). DNA-dependent ATPase and 3'-5' DNA helicase that may be involved in repair of stalled replication forks. The protein is ATP-dependent DNA helicase Hel308 of Saccharolobus solfataricus (strain ATCC 35092 / DSM 1617 / JCM 11322 / P2) (Sulfolobus solfataricus).